A 162-amino-acid polypeptide reads, in one-letter code: Cytochrome c-type biogenesis protein CcmE (162 aa).

Over 1-7 (MTRKQRR) the chain is Cytoplasmic. The helical; Signal-anchor for type II membrane protein transmembrane segment at 8–28 (LTMIGGSLVVLAIAAALVLNA) threads the bilayer. The Periplasmic segment spans residues 29-162 (LRDSIVFFST…EASGKQGVSQ (134 aa)). Positions 122 and 126 each coordinate heme. The disordered stretch occupies residues 138 to 162 (QGHWKDDYGPQAGAVEASGKQGVSQ).

Belongs to the CcmE/CycJ family.

Its subcellular location is the cell inner membrane. Functionally, heme chaperone required for the biogenesis of c-type cytochromes. Transiently binds heme delivered by CcmC and transfers the heme to apo-cytochromes in a process facilitated by CcmF and CcmH. The polypeptide is Cytochrome c-type biogenesis protein CcmE (Nitrobacter hamburgensis (strain DSM 10229 / NCIMB 13809 / X14)).